A 160-amino-acid chain; its full sequence is Protein-export protein SecB (160 aa).

The protein belongs to the SecB family. Homotetramer, a dimer of dimers. One homotetramer interacts with 1 SecA dimer.

It is found in the cytoplasm. In terms of biological role, one of the proteins required for the normal export of preproteins out of the cell cytoplasm. It is a molecular chaperone that binds to a subset of precursor proteins, maintaining them in a translocation-competent state. It also specifically binds to its receptor SecA. The polypeptide is Protein-export protein SecB (Burkholderia lata (strain ATCC 17760 / DSM 23089 / LMG 22485 / NCIMB 9086 / R18194 / 383)).